We begin with the raw amino-acid sequence, 155 residues long: Gene 27 protein (155 aa).

The disordered stretch occupies residues 41–114 (KAKTQGMNVP…KAPENPNLPN (74 aa)). Composition is skewed to basic and acidic residues over residues 55 to 68 (KKPE…EKPT) and 78 to 95 (TAKE…ETKA).

Its function is as follows. Required for late gene transcription and DNA replication. The protein is Gene 27 protein (27) of Bacillus subtilis (Bacteriophage SP01).